A 328-amino-acid polypeptide reads, in one-letter code: Nucleotide-binding protein Blon_1085/BLIJ_1109 (328 aa).

Positions 1-33 are disordered; sequence MSQQTTIRDTGEAAATNAPANSATSTSTPDNQP. The span at 13–29 shows a compositional bias: low complexity; sequence AAATNAPANSATSTSTP. 46–53 provides a ligand contact to ATP; it reads GMSGAGRS. 101–104 is a GTP binding site; sequence DVRS.

This sequence belongs to the RapZ-like family.

Functionally, displays ATPase and GTPase activities. This is Nucleotide-binding protein Blon_1085/BLIJ_1109 from Bifidobacterium longum subsp. infantis (strain ATCC 15697 / DSM 20088 / JCM 1222 / NCTC 11817 / S12).